We begin with the raw amino-acid sequence, 144 residues long: Large ribosomal subunit protein uL15 (144 aa).

The tract at residues 1 to 49 (MKLNTLSPAAGAKSAAKRVGRGIGSGLGKTAGRGHKGQKSRSGGGVRVG) is disordered. Over residues 21 to 31 (RGIGSGLGKTA) the composition is skewed to gly residues.

Belongs to the universal ribosomal protein uL15 family. In terms of assembly, part of the 50S ribosomal subunit.

In terms of biological role, binds to the 23S rRNA. The chain is Large ribosomal subunit protein uL15 from Shewanella loihica (strain ATCC BAA-1088 / PV-4).